Reading from the N-terminus, the 362-residue chain is tRNA-specific 2-thiouridylase MnmA 3 (362 aa).

Residues 11–18 (GMSGGIDS) and methionine 37 contribute to the ATP site. Residue cysteine 91 is the Nucleophile of the active site. A disulfide bridge links cysteine 91 with cysteine 188. ATP is bound at residue glycine 115. The interaction with tRNA stretch occupies residues 137 to 139 (KDQ). The Cysteine persulfide intermediate role is filled by cysteine 188. The segment at 296 to 297 (RY) is interaction with tRNA.

The protein belongs to the MnmA/TRMU family.

It is found in the cytoplasm. It carries out the reaction S-sulfanyl-L-cysteinyl-[protein] + uridine(34) in tRNA + AH2 + ATP = 2-thiouridine(34) in tRNA + L-cysteinyl-[protein] + A + AMP + diphosphate + H(+). Functionally, catalyzes the 2-thiolation of uridine at the wobble position (U34) of tRNA, leading to the formation of s(2)U34. The chain is tRNA-specific 2-thiouridylase MnmA 3 from Bacteroides fragilis (strain YCH46).